The following is a 436-amino-acid chain: 3-ketoacyl-CoA thiolase (436 aa).

Cysteine 99 acts as the Acyl-thioester intermediate in catalysis. Residues histidine 392 and cysteine 422 each act as proton acceptor in the active site.

The protein belongs to the thiolase-like superfamily. Thiolase family. Heterotetramer of two alpha chains (FadJ) and two beta chains (FadI).

Its subcellular location is the cytoplasm. It carries out the reaction an acyl-CoA + acetyl-CoA = a 3-oxoacyl-CoA + CoA. It functions in the pathway lipid metabolism; fatty acid beta-oxidation. Catalyzes the final step of fatty acid oxidation in which acetyl-CoA is released and the CoA ester of a fatty acid two carbons shorter is formed. This Shewanella loihica (strain ATCC BAA-1088 / PV-4) protein is 3-ketoacyl-CoA thiolase.